The primary structure comprises 1521 residues: Protein dispatched homolog 1 (1521 aa).

Residues 1-10 (MAVISGSDSV) are compositionally biased toward polar residues. Residues 1–55 (MAVISGSDSVLLSNGSISTSTSNPSPLSPSDGDLPAQHLGPRETPRTKASPNGCL) are disordered. Over residues 11-35 (LLSNGSISTSTSNPSPLSPSDGDLP) the composition is skewed to low complexity. N-linked (GlcNAc...) asparagine glycans are attached at residues N14 and N58. A helical transmembrane segment spans residues 189 to 209 (VVVLGMCTLLIVVCALVGVLV). N390 is a glycosylation site (N-linked (GlcNAc...) asparagine). Residues 485–657 (GIEFGIKHSL…VTWLPAVIVL (173 aa)) form the SSD domain. The next 3 membrane-spanning stretches (helical) occupy residues 499–519 (LLMD…IMCV), 524–544 (MFIT…SYFL), and 548–568 (VFNF…LVGI). N-linked (GlcNAc...) asparagine glycosylation is present at N581. The next 8 membrane-spanning stretches (helical) occupy residues 603–623 (AALS…ANYV), 637–657 (GTAI…VIVL), 717–737 (YLWL…VCVN), 986–1006 (MGLS…NIII), 1008–1028 (LYAI…LVLL), 1038–1058 (VTIS…GVAY), 1081–1101 (IAMA…STVL), and 1109–1129 (FMML…QCLC). 2 stretches are compositionally biased toward polar residues: residues 1355 to 1364 (QENLGRTSTH) and 1418 to 1428 (TKSKVSGLPNQ). The interval 1355 to 1440 (QENLGRTSTH…KEEKQVEPSL (86 aa)) is disordered. N-linked (GlcNAc...) asparagine glycosylation occurs at N1455.

This sequence belongs to the dispatched family. Interacts with SHH; via the cholesterol anchor of the dually lipid-modified SHH (ShhNp).

The protein localises to the membrane. Functionally, functions in hedgehog (Hh) signaling. Regulates the release and extracellular accumulation of cholesterol-modified hedgehog proteins and is hence required for effective production of the Hh signal. Synergizes with SCUBE2 to cause an increase in SHH secretion. In Mus musculus (Mouse), this protein is Protein dispatched homolog 1 (Disp1).